Reading from the N-terminus, the 114-residue chain is Hydrogenase maturation factor HypA (114 aa).

His2 serves as a coordination point for Ni(2+). Residues Cys73, Cys76, Cys90, and Cys93 each contribute to the Zn(2+) site.

This sequence belongs to the HypA/HybF family.

Functionally, involved in the maturation of [NiFe] hydrogenases. Required for nickel insertion into the metal center of the hydrogenase. The protein is Hydrogenase maturation factor HypA of Klebsiella pneumoniae (strain 342).